The chain runs to 277 residues: Basic leucine zipper transcriptional factor ATF-like 2 (277 aa).

Disordered regions lie at residues 15–50 (LGES…HQQH), 126–146 (FQTP…CSHE), and 191–256 (SFSK…QKSS). The bZIP domain maps to 18-81 (SQKQLKKKQK…AGWGRTLHLH (64 aa)). The segment at 20 to 42 (KQLKKKQKNRVAAQRSRQKHTSK) is basic motif. Basic and acidic residues predominate over residues 41 to 50 (SKADALHQQH). Residues 46–67 (LHQQHESLEKQNHALRKEIQAL) are leucine-zipper. Polar residues-rich tracts occupy residues 213-227 (RQEQ…SSDS) and 247-256 (GSSTHWQKSS).

The protein belongs to the bZIP family. Heterodimer; heterodimerizes with JUN family proteins.

The protein localises to the nucleus. In terms of biological role, AP-1 family transcription factor that controls the differentiation of lineage-specific cells in the immune system. Selectively suppresses CCN1 transcription and hence blocks the downstream cell proliferation signals produced by CCN1 and inhibits CCN1-induced anchorage-independent growth and invasion in several cancer types. Possibly acts by interfering with AP-1 binding to CCN1 promoter. Following infection, participates in the differentiation of CD8(+) thymic conventional dendritic cells in the immune system. Acts via the formation of a heterodimer with JUN family proteins that recognizes and binds DNA sequence 5'-TGA[CG]TCA-3' and regulates expression of target genes. This Mus musculus (Mouse) protein is Basic leucine zipper transcriptional factor ATF-like 2 (Batf2).